The sequence spans 471 residues: Trigger factor (471 aa).

The PPIase FKBP-type domain maps to 165–244; the sequence is GDFVSIDLRA…VQSVKERVLP (80 aa). Residues 407-471 form a disordered region; the sequence is VTDASGNPVD…EATAEDPAKS (65 aa). Acidic residues predominate over residues 416 to 443; it reads DLEELVGGTEEDDVTEDATEDVTEDAAP.

It belongs to the FKBP-type PPIase family. Tig subfamily.

Its subcellular location is the cytoplasm. The enzyme catalyses [protein]-peptidylproline (omega=180) = [protein]-peptidylproline (omega=0). Its function is as follows. Involved in protein export. Acts as a chaperone by maintaining the newly synthesized protein in an open conformation. Functions as a peptidyl-prolyl cis-trans isomerase. This is Trigger factor from Kineococcus radiotolerans (strain ATCC BAA-149 / DSM 14245 / SRS30216).